We begin with the raw amino-acid sequence, 336 residues long: uncharacterized protein (336 aa).

Residues Lys-39 and Tyr-166 each contribute to the NADP(+) site.

The protein belongs to the NAD(P)-dependent epimerase/dehydratase family. Dihydroflavonol-4-reductase subfamily.

Its subcellular location is the cytoplasm. The protein localises to the nucleus. This is an uncharacterized protein from Schizosaccharomyces pombe (strain 972 / ATCC 24843) (Fission yeast).